A 720-amino-acid chain; its full sequence is Glutaryl-7-aminocephalosporanic-acid acylase (720 aa).

The first 29 residues, 1-29 (MLRVLHRAASALVMATVIGLAPGVAFALA), serve as a signal peptide directing secretion. Positions 188–198 (EGDPPDLADQG) are cleaved as a propeptide — spacer peptide. Ser-199 serves as the catalytic Nucleophile. Active-site residues include His-221 and Glu-653.

The protein belongs to the peptidase S45 family. In terms of assembly, heterodimer of a small subunit and a large subunit processed from the same precursor.

It is found in the periplasm. It carries out the reaction (7R)-7-(4-carboxybutanamido)cephalosporanate + H2O = (7R)-7-aminocephalosporanate + glutarate. Functionally, catalyzes the deacylation of 7 beta-(4-carboxybutanamido)cephalosporanic acid (glutaryl-7-aminocephalosporanic acid or GL-7-ACA) to 7-aminocephalosporanic acid (7-ACA). Cannot efficiently use cephalosporin C (CPC), penicillin G, or ampicillin as substrates. This Brevundimonas diminuta (Pseudomonas diminuta) protein is Glutaryl-7-aminocephalosporanic-acid acylase.